A 416-amino-acid chain; its full sequence is Enterobactin exporter EntS (416 aa).

Over 1–21 (MNKQSWLLNLSLLKTHPAFRA) the chain is Cytoplasmic. Residues 22–42 (VFLARFISIVSLGLLGVAVPV) form a helical membrane-spanning segment. Topologically, residues 43-55 (QIQMMTHSTWQVG) are periplasmic. A helical membrane pass occupies residues 56-76 (LSVTLTGGAMFVGLMVGGVLA). Residues 77 to 83 (DRYERKK) are Cytoplasmic-facing. The helical transmembrane segment at 84-104 (VILLARGTCGIGFIGLCLNAL) threads the bilayer. Residues 105–109 (LPEPS) are Periplasmic-facing. The helical transmembrane segment at 110–130 (LLAIYLLGLWDGFFASLGVTA) threads the bilayer. Topologically, residues 131–156 (LLAATPALVGRENLMQAGAITMLTVR) are cytoplasmic. A helical transmembrane segment spans residues 157 to 177 (LGSVISPMIGGLLLATGGVAW). Asparagine 178 is a topological domain (periplasmic). A helical transmembrane segment spans residues 179 to 199 (YGLAAAGTFITLLPLLSLPAL). The Cytoplasmic portion of the chain corresponds to 200–218 (PPPPQPREHPLKSLLAGFR). Residues 219 to 239 (FLLASPLVGGIALLGGLLTMA) form a helical membrane-spanning segment. Residues 240–256 (SAVRVLYPALADNWQMS) are Periplasmic-facing. Residues 257–277 (AAQIGFLYAAIPLGAAIGALT) traverse the membrane as a helical segment. Over 278-287 (SGKLAHSARP) the chain is Cytoplasmic. A helical membrane pass occupies residues 288 to 307 (GLLMLLSTLGSFLAIGLFGL). Residues 308–313 (MPMWIL) are Periplasmic-facing. A helical transmembrane segment spans residues 314–336 (GVVCLALFGWLSAVSSLLQYTML). Residues 337–356 (QTQTPEAMLGRINGLWTAQN) are Cytoplasmic-facing. A helical membrane pass occupies residues 357–377 (VTGDAIGAALLGGLGAMMTPV). Residue alanine 378 is a topological domain, periplasmic. A helical membrane pass occupies residues 379–399 (SASASGFGLLIIGVLLLLVLV). Over 400–416 (ELRRFRQTPPQMTASDS) the chain is Cytoplasmic.

This sequence belongs to the major facilitator superfamily. EntS (TC 2.A.1.38) family.

The protein resides in the cell inner membrane. In terms of biological role, component of an export pathway for enterobactin. The chain is Enterobactin exporter EntS from Escherichia coli O7:K1 (strain IAI39 / ExPEC).